A 130-amino-acid polypeptide reads, in one-letter code: Histone H2A type 1-C (130 aa).

The disordered stretch occupies residues 1–22 (MSGRGKQGGKARAKAKSRSSRA). The residue at position 2 (S2) is an N-acetylserine. Residue S2 is modified to Phosphoserine; by RPS6KA5. At R4 the chain carries Citrulline; alternate. A Symmetric dimethylarginine; by PRMT5; alternate modification is found at R4. Residues K6 and K10 each carry the N6-(2-hydroxyisobutyryl)lysine; alternate modification. K6 is subject to N6-acetyllysine; alternate. Residues 7–19 (QGGKARAKAKSRS) are compositionally biased toward basic residues. An N6-(beta-hydroxybutyryl)lysine; alternate mark is found at K10 and K14. K10 carries the N6-lactoyllysine; alternate modification. K10 is modified (N6-succinyllysine; alternate). K14 participates in a covalent cross-link: Glycyl lysine isopeptide (Lys-Gly) (interchain with G-Cter in ubiquitin); alternate. A Glycyl lysine isopeptide (Lys-Gly) (interchain with G-Cter in ubiquitin) cross-link involves residue K16. K37 carries the N6-(2-hydroxyisobutyryl)lysine; alternate modification. Position 37 is an N6-(beta-hydroxybutyryl)lysine; alternate (K37). Position 37 is an N6-crotonyllysine; alternate (K37). Residues K75 and K76 each carry the N6-(2-hydroxyisobutyryl)lysine modification. K96 carries the post-translational modification N6-(2-hydroxyisobutyryl)lysine; alternate. Residue K96 is modified to N6-(beta-hydroxybutyryl)lysine; alternate. K96 is modified (N6-succinyllysine; alternate). Position 96 is an N6-glutaryllysine; alternate (K96). Q105 carries the N5-methylglutamine modification. N6-(2-hydroxyisobutyryl)lysine; alternate is present on K119. K119 carries the post-translational modification N6-(beta-hydroxybutyryl)lysine; alternate. N6-crotonyllysine; alternate is present on residues K119 and K120. N6-glutaryllysine; alternate occurs at positions 119 and 120. K120 participates in a covalent cross-link: Glycyl lysine isopeptide (Lys-Gly) (interchain with G-Cter in ubiquitin); alternate. The residue at position 121 (T121) is a Phosphothreonine; by DCAF1. K126 is subject to N6-crotonyllysine; alternate. K126 carries the post-translational modification N6-glutaryllysine; alternate.

It belongs to the histone H2A family. The nucleosome is a histone octamer containing two molecules each of H2A, H2B, H3 and H4 assembled in one H3-H4 heterotetramer and two H2A-H2B heterodimers. The octamer wraps approximately 147 bp of DNA. Post-translationally, deiminated on Arg-4 in granulocytes upon calcium entry. Monoubiquitination of Lys-120 (H2AK119Ub) by RING1, TRIM37 and RNF2/RING2 complex gives a specific tag for epigenetic transcriptional repression and participates in X chromosome inactivation of female mammals. It is involved in the initiation of both imprinted and random X inactivation. Ubiquitinated H2A is enriched in inactive X chromosome chromatin. Ubiquitination of H2A functions downstream of methylation of 'Lys-27' of histone H3 (H3K27me). H2AK119Ub by RNF2/RING2 can also be induced by ultraviolet and may be involved in DNA repair. Monoubiquitination of Lys-120 (H2AK119Ub) by TRIM37 may promote transformation of cells in a number of breast cancers. Following DNA double-strand breaks (DSBs), it is ubiquitinated through 'Lys-63' linkage of ubiquitin moieties by the E2 ligase UBE2N and the E3 ligases RNF8 and RNF168, leading to the recruitment of repair proteins to sites of DNA damage. Ubiquitination at Lys-14 and Lys-16 (H2AK13Ub and H2AK15Ub, respectively) in response to DNA damage is initiated by RNF168 that mediates monoubiquitination at these 2 sites, and 'Lys-63'-linked ubiquitin are then conjugated to monoubiquitin; RNF8 is able to extend 'Lys-63'-linked ubiquitin chains in vitro. Deubiquitinated by USP51 at Lys-14 and Lys-16 (H2AK13Ub and H2AK15Ub, respectively) after damaged DNA is repaired. H2AK119Ub and ionizing radiation-induced 'Lys-63'-linked ubiquitination (H2AK13Ub and H2AK15Ub) are distinct events. In terms of processing, phosphorylation on Ser-2 (H2AS1ph) is enhanced during mitosis. Phosphorylation on Ser-2 by RPS6KA5/MSK1 directly represses transcription. Acetylation of H3 inhibits Ser-2 phosphorylation by RPS6KA5/MSK1. Phosphorylation at Thr-121 (H2AT120ph) by DCAF1 is present in the regulatory region of many tumor suppresor genes and down-regulates their transcription. Post-translationally, glutamine methylation at Gln-105 (H2AQ104me) by FBL is specifically dedicated to polymerase I. It is present at 35S ribosomal DNA locus and impairs binding of the FACT complex. Symmetric dimethylation on Arg-4 by the PRDM1/PRMT5 complex may play a crucial role in the germ-cell lineage. In terms of processing, crotonylation (Kcr) is specifically present in male germ cells and marks testis-specific genes in post-meiotic cells, including X-linked genes that escape sex chromosome inactivation in haploid cells. Crotonylation marks active promoters and enhancers and confers resistance to transcriptional repressors. It is also associated with post-meiotically activated genes on autosomes. Post-translationally, lactylated in macrophages by EP300/P300 by using lactoyl-CoA directly derived from endogenous or exogenous lactate, leading to stimulates gene transcription.

It localises to the nucleus. Its subcellular location is the chromosome. In terms of biological role, core component of nucleosome. Nucleosomes wrap and compact DNA into chromatin, limiting DNA accessibility to the cellular machineries which require DNA as a template. Histones thereby play a central role in transcription regulation, DNA repair, DNA replication and chromosomal stability. DNA accessibility is regulated via a complex set of post-translational modifications of histones, also called histone code, and nucleosome remodeling. In Homo sapiens (Human), this protein is Histone H2A type 1-C.